The following is a 199-amino-acid chain: Cytochrome c oxidase subunit 2 (199 aa).

A helical membrane pass occupies residues 1–13 (AICSLVLYLLTLM). Residues 14–26 (LMEKLSSNTVDAQ) lie on the Mitochondrial matrix side of the membrane. Residues 27 to 54 (EVELIWTILPAIVLILLALPSLQILYMM) form a helical membrane-spanning segment. Over 55–199 (DEIDEPDLTL…SSLLSISSSL (145 aa)) the chain is Mitochondrial intermembrane. The Cu cation site is built by His128, Cys163, Glu165, Cys167, His171, and Met174. Residue Glu165 participates in Mg(2+) binding.

It belongs to the cytochrome c oxidase subunit 2 family. As to quaternary structure, component of the cytochrome c oxidase (complex IV, CIV), a multisubunit enzyme composed of 14 subunits. The complex is composed of a catalytic core of 3 subunits MT-CO1, MT-CO2 and MT-CO3, encoded in the mitochondrial DNA, and 11 supernumerary subunits COX4I, COX5A, COX5B, COX6A, COX6B, COX6C, COX7A, COX7B, COX7C, COX8 and NDUFA4, which are encoded in the nuclear genome. The complex exists as a monomer or a dimer and forms supercomplexes (SCs) in the inner mitochondrial membrane with NADH-ubiquinone oxidoreductase (complex I, CI) and ubiquinol-cytochrome c oxidoreductase (cytochrome b-c1 complex, complex III, CIII), resulting in different assemblies (supercomplex SCI(1)III(2)IV(1) and megacomplex MCI(2)III(2)IV(2)). Found in a complex with TMEM177, COA6, COX18, COX20, SCO1 and SCO2. Interacts with TMEM177 in a COX20-dependent manner. Interacts with COX20. Interacts with COX16. The cofactor is Cu cation.

Its subcellular location is the mitochondrion inner membrane. The enzyme catalyses 4 Fe(II)-[cytochrome c] + O2 + 8 H(+)(in) = 4 Fe(III)-[cytochrome c] + 2 H2O + 4 H(+)(out). Functionally, component of the cytochrome c oxidase, the last enzyme in the mitochondrial electron transport chain which drives oxidative phosphorylation. The respiratory chain contains 3 multisubunit complexes succinate dehydrogenase (complex II, CII), ubiquinol-cytochrome c oxidoreductase (cytochrome b-c1 complex, complex III, CIII) and cytochrome c oxidase (complex IV, CIV), that cooperate to transfer electrons derived from NADH and succinate to molecular oxygen, creating an electrochemical gradient over the inner membrane that drives transmembrane transport and the ATP synthase. Cytochrome c oxidase is the component of the respiratory chain that catalyzes the reduction of oxygen to water. Electrons originating from reduced cytochrome c in the intermembrane space (IMS) are transferred via the dinuclear copper A center (CU(A)) of subunit 2 and heme A of subunit 1 to the active site in subunit 1, a binuclear center (BNC) formed by heme A3 and copper B (CU(B)). The BNC reduces molecular oxygen to 2 water molecules using 4 electrons from cytochrome c in the IMS and 4 protons from the mitochondrial matrix. The protein is Cytochrome c oxidase subunit 2 (MT-CO2) of Casuarius bennetti (Dwarf cassowary).